The primary structure comprises 264 residues: S-adenosylmethionine decarboxylase proenzyme (264 aa).

The Schiff-base intermediate with substrate; via pyruvic acid role is filled by Ser112. Residue Ser112 is modified to Pyruvic acid (Ser); by autocatalysis. The active-site Proton acceptor; for processing activity is His117. Cys140 serves as the catalytic Proton donor; for catalytic activity.

Belongs to the prokaryotic AdoMetDC family. Type 2 subfamily. Heterooctamer of four alpha and four beta chains arranged as a tetramer of alpha/beta heterodimers. It depends on pyruvate as a cofactor. In terms of processing, is synthesized initially as an inactive proenzyme. Formation of the active enzyme involves a self-maturation process in which the active site pyruvoyl group is generated from an internal serine residue via an autocatalytic post-translational modification. Two non-identical subunits are generated from the proenzyme in this reaction, and the pyruvate is formed at the N-terminus of the alpha chain, which is derived from the carboxyl end of the proenzyme. The post-translation cleavage follows an unusual pathway, termed non-hydrolytic serinolysis, in which the side chain hydroxyl group of the serine supplies its oxygen atom to form the C-terminus of the beta chain, while the remainder of the serine residue undergoes an oxidative deamination to produce ammonia and the pyruvoyl group blocking the N-terminus of the alpha chain.

The catalysed reaction is S-adenosyl-L-methionine + H(+) = S-adenosyl 3-(methylsulfanyl)propylamine + CO2. It functions in the pathway amine and polyamine biosynthesis; S-adenosylmethioninamine biosynthesis; S-adenosylmethioninamine from S-adenosyl-L-methionine: step 1/1. Catalyzes the decarboxylation of S-adenosylmethionine to S-adenosylmethioninamine (dcAdoMet), the propylamine donor required for the synthesis of the polyamines spermine and spermidine from the diamine putrescine. The polypeptide is S-adenosylmethionine decarboxylase proenzyme (Photorhabdus laumondii subsp. laumondii (strain DSM 15139 / CIP 105565 / TT01) (Photorhabdus luminescens subsp. laumondii)).